The sequence spans 232 residues: tRNA (guanine-N(1)-)-methyltransferase (232 aa).

S-adenosyl-L-methionine is bound by residues glycine 111 and 131 to 136 (IGDYIL).

It belongs to the RNA methyltransferase TrmD family. As to quaternary structure, homodimer.

The protein resides in the cytoplasm. The catalysed reaction is guanosine(37) in tRNA + S-adenosyl-L-methionine = N(1)-methylguanosine(37) in tRNA + S-adenosyl-L-homocysteine + H(+). Functionally, specifically methylates guanosine-37 in various tRNAs. This is tRNA (guanine-N(1)-)-methyltransferase from Bartonella henselae (strain ATCC 49882 / DSM 28221 / CCUG 30454 / Houston 1) (Rochalimaea henselae).